Consider the following 107-residue polypeptide: Small ribosomal subunit protein bS16m (107 aa).

Belongs to the bacterial ribosomal protein bS16 family. In terms of assembly, component of the mitochondrial small ribosomal subunit (mt-SSU). Mature N.crassa 74S mitochondrial ribosomes consist of a small (37S) and a large (54S) subunit. The 37S small subunit contains a 16S ribosomal RNA (16S mt-rRNA) and 32 different proteins. The 54S large subunit contains a 23S rRNA (23S mt-rRNA) and 42 different proteins.

The protein localises to the mitochondrion. Component of the mitochondrial ribosome (mitoribosome), a dedicated translation machinery responsible for the synthesis of mitochondrial genome-encoded proteins, including at least some of the essential transmembrane subunits of the mitochondrial respiratory chain. The mitoribosomes are attached to the mitochondrial inner membrane and translation products are cotranslationally integrated into the membrane. This Neurospora crassa (strain ATCC 24698 / 74-OR23-1A / CBS 708.71 / DSM 1257 / FGSC 987) protein is Small ribosomal subunit protein bS16m (cyt-21).